A 211-amino-acid chain; its full sequence is RING finger protein 222 (211 aa).

An RING-type zinc finger spans residues 14–65 (CPVCYEKFRDLDGASRTLSCGHVFCHDCLVKYLLSTRVDGQVQRTIVCPICR). Residues 187 to 207 (LITLIAVVAVVAAILPWVLLV) form a helical membrane-spanning segment.

It is found in the membrane. The chain is RING finger protein 222 (Rnf222) from Mus musculus (Mouse).